We begin with the raw amino-acid sequence, 297 residues long: Homoserine kinase (297 aa).

82 to 92 is an ATP binding site; it reads PLTRGLGSSAS.

Belongs to the GHMP kinase family. Homoserine kinase subfamily.

It localises to the cytoplasm. The catalysed reaction is L-homoserine + ATP = O-phospho-L-homoserine + ADP + H(+). It participates in amino-acid biosynthesis; L-threonine biosynthesis; L-threonine from L-aspartate: step 4/5. In terms of biological role, catalyzes the ATP-dependent phosphorylation of L-homoserine to L-homoserine phosphate. In Bacillus anthracis (strain CDC 684 / NRRL 3495), this protein is Homoserine kinase.